We begin with the raw amino-acid sequence, 106 residues long: Urease subunit beta (106 aa).

The protein belongs to the urease beta subunit family. As to quaternary structure, heterotrimer of UreA (gamma), UreB (beta) and UreC (alpha) subunits. Three heterotrimers associate to form the active enzyme.

The protein localises to the cytoplasm. The catalysed reaction is urea + 2 H2O + H(+) = hydrogencarbonate + 2 NH4(+). Its pathway is nitrogen metabolism; urea degradation; CO(2) and NH(3) from urea (urease route): step 1/1. The protein is Urease subunit beta of Klebsiella pneumoniae (strain 342).